A 317-amino-acid polypeptide reads, in one-letter code: Ribosomal RNA small subunit methyltransferase H (317 aa).

S-adenosyl-L-methionine-binding positions include 37–39 (AGH), D56, F85, D106, and Q113.

This sequence belongs to the methyltransferase superfamily. RsmH family.

The protein localises to the cytoplasm. The catalysed reaction is cytidine(1402) in 16S rRNA + S-adenosyl-L-methionine = N(4)-methylcytidine(1402) in 16S rRNA + S-adenosyl-L-homocysteine + H(+). In terms of biological role, specifically methylates the N4 position of cytidine in position 1402 (C1402) of 16S rRNA. The polypeptide is Ribosomal RNA small subunit methyltransferase H (Lactococcus lactis subsp. lactis (strain IL1403) (Streptococcus lactis)).